A 147-amino-acid polypeptide reads, in one-letter code: UPF0208 membrane protein SO_2914 (147 aa).

The next 2 membrane-spanning stretches (helical) occupy residues 40–60 (LAIL…LYTY) and 68–88 (ALTI…WLGW).

Belongs to the UPF0208 family.

Its subcellular location is the cell inner membrane. This is UPF0208 membrane protein SO_2914 from Shewanella oneidensis (strain ATCC 700550 / JCM 31522 / CIP 106686 / LMG 19005 / NCIMB 14063 / MR-1).